Reading from the N-terminus, the 274-residue chain is Urease accessory protein UreD (274 aa).

Belongs to the UreD family. As to quaternary structure, ureD, UreF and UreG form a complex that acts as a GTP-hydrolysis-dependent molecular chaperone, activating the urease apoprotein by helping to assemble the nickel containing metallocenter of UreC. The UreE protein probably delivers the nickel.

It localises to the cytoplasm. In terms of biological role, required for maturation of urease via the functional incorporation of the urease nickel metallocenter. The sequence is that of Urease accessory protein UreD from Thermosynechococcus vestitus (strain NIES-2133 / IAM M-273 / BP-1).